The following is a 638-amino-acid chain: DNA mismatch repair protein MutL (638 aa).

Residues 404-433 form a disordered region; the sequence is FGTQTNAFGSMATPRDNSRGNYSAGESRQR.

Belongs to the DNA mismatch repair MutL/HexB family.

Functionally, this protein is involved in the repair of mismatches in DNA. It is required for dam-dependent methyl-directed DNA mismatch repair. May act as a 'molecular matchmaker', a protein that promotes the formation of a stable complex between two or more DNA-binding proteins in an ATP-dependent manner without itself being part of a final effector complex. In Shewanella baltica (strain OS195), this protein is DNA mismatch repair protein MutL.